A 48-amino-acid chain; its full sequence is uncharacterized protein (48 aa).

This is an uncharacterized protein from Acidianus hospitalis (AFV-1).